The following is a 201-amino-acid chain: Twist-related protein 1 (201 aa).

The span at 1–18 shows a compositional bias: low complexity; that stretch reads MMQDVSSSPVSPADDSLS. Residues 1 to 106 form a disordered region; sequence MMQDVSSSPV…GGGSPQSYEE (106 aa). Basic residues predominate over residues 34-43; it reads RGGRKRRSSR. Gly residues-rich tracts occupy residues 46–65 and 80–100; these read AGGGAGPGGAAGGGVGGGDE and GCGGGGGGGAGGGGSSSGGGS. Residues 109 to 160 enclose the bHLH domain; that stretch reads TQRVMANVRERQRTQSLNEAFAALPKIIPTLPSDKLSKIQTLKLAARYIDFL. Residues 162-190 are sufficient for transactivation activity; the sequence is QVLQSDELDSKMASYVAHERLSYAFSVWR.

As to quaternary structure, efficient DNA binding requires dimerization with another bHLH protein. Homodimer or heterodimer with E proteins such as TCF3. ID1 binds preferentially to TCF3 but does not interact efficiently with TWIST1 so ID1 levels control the amount of TCF3 available to dimerize with TWIST and thus determine the type of dimer formed.

The protein resides in the nucleus. Functionally, acts as a transcriptional regulator. Inhibits myogenesis by sequestrating E proteins, inhibiting trans-activation by MEF2, and inhibiting DNA-binding by MYOD1 through physical interaction. This interaction probably involves the basic domains of both proteins. Also represses expression of pro-inflammatory cytokines such as TNFA and IL1B. Regulates cranial suture patterning and fusion. Activates transcription as a heterodimer with E proteins. Regulates gene expression differentially, depending on dimer composition. Homodimers induce expression of FGFR2 and POSTN while heterodimers repress FGFR2 and POSTN expression and induce THBS1 expression. Heterodimerization is also required for osteoblast differentiation. Represses the activity of the circadian transcriptional activator: NPAS2-BMAL1 heterodimer. The protein is Twist-related protein 1 (TWIST1) of Pan troglodytes (Chimpanzee).